A 229-amino-acid chain; its full sequence is tRNA (guanine-N(7)-)-methyltransferase (229 aa).

The S-adenosyl-L-methionine site is built by glutamate 59, glutamate 84, aspartate 111, and aspartate 134. Aspartate 134 is a catalytic residue. Residue lysine 138 participates in substrate binding. The segment at 140 to 145 (KHNKRR) is interaction with RNA. Residues aspartate 170 and 207–210 (TKFE) contribute to the substrate site.

It belongs to the class I-like SAM-binding methyltransferase superfamily. TrmB family.

The enzyme catalyses guanosine(46) in tRNA + S-adenosyl-L-methionine = N(7)-methylguanosine(46) in tRNA + S-adenosyl-L-homocysteine. It functions in the pathway tRNA modification; N(7)-methylguanine-tRNA biosynthesis. In terms of biological role, catalyzes the formation of N(7)-methylguanine at position 46 (m7G46) in tRNA. This Saccharophagus degradans (strain 2-40 / ATCC 43961 / DSM 17024) protein is tRNA (guanine-N(7)-)-methyltransferase.